We begin with the raw amino-acid sequence, 161 residues long: 3-isopropylmalate dehydratase small subunit 1 (161 aa).

This sequence belongs to the LeuD family. LeuD type 2 subfamily. As to quaternary structure, heterodimer of LeuC and LeuD.

The enzyme catalyses (2R,3S)-3-isopropylmalate = (2S)-2-isopropylmalate. It participates in amino-acid biosynthesis; L-leucine biosynthesis; L-leucine from 3-methyl-2-oxobutanoate: step 2/4. In terms of biological role, catalyzes the isomerization between 2-isopropylmalate and 3-isopropylmalate, via the formation of 2-isopropylmaleate. The sequence is that of 3-isopropylmalate dehydratase small subunit 1 (leuD1) from Archaeoglobus fulgidus (strain ATCC 49558 / DSM 4304 / JCM 9628 / NBRC 100126 / VC-16).